The following is a 117-amino-acid chain: MEYKRADRVADLLRREMADLLLRRIKDPRVSKVTITAIEVTDDLQNAKVFFCLMGAATEEEKRSAALGLNRGKGFMRLELGKRLHLRYLPQLSFHYDSSFEYGDKIERLLKELHKNE.

Belongs to the RbfA family. Monomer. Binds 30S ribosomal subunits, but not 50S ribosomal subunits or 70S ribosomes.

The protein resides in the cytoplasm. Its function is as follows. One of several proteins that assist in the late maturation steps of the functional core of the 30S ribosomal subunit. Associates with free 30S ribosomal subunits (but not with 30S subunits that are part of 70S ribosomes or polysomes). Required for efficient processing of 16S rRNA. May interact with the 5'-terminal helix region of 16S rRNA. In Syntrophobacter fumaroxidans (strain DSM 10017 / MPOB), this protein is Ribosome-binding factor A.